The primary structure comprises 290 residues: 4-diphosphocytidyl-2-C-methyl-D-erythritol kinase (290 aa).

Residue lysine 13 is part of the active site. 96–106 contributes to the ATP binding site; the sequence is PMGGGIGGGSS. Aspartate 138 is a catalytic residue.

The protein belongs to the GHMP kinase family. IspE subfamily.

The enzyme catalyses 4-CDP-2-C-methyl-D-erythritol + ATP = 4-CDP-2-C-methyl-D-erythritol 2-phosphate + ADP + H(+). It functions in the pathway isoprenoid biosynthesis; isopentenyl diphosphate biosynthesis via DXP pathway; isopentenyl diphosphate from 1-deoxy-D-xylulose 5-phosphate: step 3/6. Functionally, catalyzes the phosphorylation of the position 2 hydroxy group of 4-diphosphocytidyl-2C-methyl-D-erythritol. The polypeptide is 4-diphosphocytidyl-2-C-methyl-D-erythritol kinase (Vibrio campbellii (strain ATCC BAA-1116)).